A 423-amino-acid chain; its full sequence is Inactive autotransporter heptosyltransferase BimC (423 aa).

Residues 1-10 (MPKVTFSGSA) show a composition bias toward polar residues. The segment at 1–49 (MPKVTFSGSAPTLGVHAPPALDPRQPASPPPAASNGTHARGFSPPADMP) is disordered. Fe(3+) contacts are provided by cysteine 371, cysteine 374, cysteine 390, and cysteine 402.

Belongs to the glycosyltransferase 9 family. In terms of assembly, homotrimer or homotetramer. Fe(3+) is required as a cofactor.

Its subcellular location is the cell inner membrane. It is found in the cytoplasm. Iron-binding protein which is required for the asymmetric polar distribution of the autotransporter BimA on the bacterial surface prior to its translocation into bacterial periplasm. Lacks heptosyltransferase activity. The chain is Inactive autotransporter heptosyltransferase BimC from Burkholderia thailandensis (strain ATCC 700388 / DSM 13276 / CCUG 48851 / CIP 106301 / E264).